The chain runs to 141 residues: Large ribosomal subunit protein uL16m (141 aa).

This sequence belongs to the universal ribosomal protein uL16 family.

The protein localises to the mitochondrion. This is Large ribosomal subunit protein uL16m (RPL16) from Acanthamoeba castellanii (Amoeba).